The chain runs to 306 residues: Ubiquitin carboxyl-terminal hydrolase RPN11 (306 aa).

M1 is subject to N-acetylmethionine. Residues 1-20 (MERLQRLMMNSKVGSADTGR) are disordered. Residues 27–162 (VYISSIALLK…IDAFRLIDTG (136 aa)) enclose the MPN domain. Zn(2+) contacts are provided by H109, H111, and D122. Positions 109 to 122 (HSHPGFGCWLSSVD) match the JAMM motif motif.

Belongs to the peptidase M67A family. In terms of assembly, component of the lid subcomplex of the 19S proteasome regulatory particle complex (also named PA700 complex). The 26S proteasome consists of a 20S proteasome core and two 19S regulatory subunits. Interacts directly with RPN8 and STS1. In terms of processing, N-acetylated by NAT3.

The catalysed reaction is Thiol-dependent hydrolysis of ester, thioester, amide, peptide and isopeptide bonds formed by the C-terminal Gly of ubiquitin (a 76-residue protein attached to proteins as an intracellular targeting signal).. Component of the lid subcomplex of the 26S proteasome, a multiprotein complex involved in the ATP-dependent degradation of ubiquitinated proteins. RPN11 is the only catalytically active member of the lid and serves as the essential deubiquitinase of the proteasome. This Saccharomyces cerevisiae (strain ATCC 204508 / S288c) (Baker's yeast) protein is Ubiquitin carboxyl-terminal hydrolase RPN11 (RPN11).